Here is a 124-residue protein sequence, read N- to C-terminus: Large ribosomal subunit protein uL18 (124 aa).

The protein belongs to the universal ribosomal protein uL18 family. In terms of assembly, part of the 50S ribosomal subunit; part of the 5S rRNA/L5/L18/L25 subcomplex. Contacts the 5S and 23S rRNAs.

Functionally, this is one of the proteins that bind and probably mediate the attachment of the 5S RNA into the large ribosomal subunit, where it forms part of the central protuberance. In Frankia casuarinae (strain DSM 45818 / CECT 9043 / HFP020203 / CcI3), this protein is Large ribosomal subunit protein uL18.